Consider the following 219-residue polypeptide: MKITYLGHACVVLQGSKCVLIDPFIPEGEIRVTPDLVAVTHAHADHMGIAASYTAPIITNNEIAHYLRGKGCITEAMNIGGTIVVDGISFTMTQAIHSSWLEDEGIGMYGGSAAGFVISMDGRTVYHAGDTGLFSDMRLIGELYHPDVALIPIGGRFTMGPREGMMAAEFIGAPVVIPIHYNTFDKIRQDVSEFARAINETTDMKTVILEPGMEYEIKK.

It belongs to the UPF0173 family.

This Methanospirillum hungatei JF-1 (strain ATCC 27890 / DSM 864 / NBRC 100397 / JF-1) protein is UPF0173 metal-dependent hydrolase Mhun_1705.